The chain runs to 660 residues: Replication restart protein PriA (660 aa).

The 169-residue stretch at I145–M313 folds into the Helicase ATP-binding domain. G158 to T165 contacts ATP. Positions D256–H259 match the DEAH box motif. Residues C370, C373, C379, C382, C397, C400, C410, and C413 each contribute to the Zn(2+) site. The 153-residue stretch at K405–R557 folds into the Helicase C-terminal domain.

It belongs to the helicase family. PriA subfamily. As to quaternary structure, component of the replication restart primosome. Zn(2+) serves as cofactor.

The enzyme catalyses Couples ATP hydrolysis with the unwinding of duplex DNA by translocating in the 3'-5' direction.. It carries out the reaction ATP + H2O = ADP + phosphate + H(+). Its function is as follows. Initiates the restart of stalled replication forks, which reloads the replicative helicase on sites other than the origin of replication. Recognizes and binds to abandoned replication forks and remodels them to uncover a helicase loading site. Promotes assembly of the primosome at these replication forks. In Borreliella burgdorferi (strain ATCC 35210 / DSM 4680 / CIP 102532 / B31) (Borrelia burgdorferi), this protein is Replication restart protein PriA.